The sequence spans 381 residues: GDP-mannose transporter (381 aa).

Residues 1 to 40 (MADDKKTNDYTVEMDKLDQGSKNFEAPLPPVQPRSAPNAQ) are Cytoplasmic-facing. A helical membrane pass occupies residues 41 to 61 (LANNPILPVLAYCGSSIMMTV). At 62 to 71 (MNKYVLSGTD) the chain is on the lumenal side. Residues 72 to 92 (FNLNFLLLCVQSIVCIVAIQT) traverse the membrane as a helical segment. Residues 93-110 (CKASKLITYRDFNADEAK) lie on the Cytoplasmic side of the membrane. The chain crosses the membrane as a helical span at residues 111-127 (KWFPITLLLIGMIYTGS). The Lumenal portion of the chain corresponds to 128–134 (KALQFLS). The chain crosses the membrane as a helical span at residues 135–151 (IPVYTIFKNLTIILIAY). At 152-160 (GEVLWFGGS) the chain is on the cytoplasmic side. A helical membrane pass occupies residues 161–182 (VTGLTLFSFGLMVLSSIIAAWA). Over 183-200 (DIKHAVESSGDATAKVST) the chain is Lumenal. The helical transmembrane segment at 201–221 (LNAGYIWMLINCLCTSSYVLG) threads the bilayer. The Cytoplasmic segment spans residues 222–233 (MRKRIKLTNFKD). Residues 234 to 254 (FDTMFYNNLLSIPVLLVLTFL) form a helical membrane-spanning segment. At 255 to 274 (MEDWSSANITRNFPPADRNG) the chain is on the lumenal side. N262 carries N-linked (GlcNAc...) asparagine glycosylation. Residues 275–295 (IMFAMILSGLSSVFISYTSAW) traverse the membrane as a helical segment. The Cytoplasmic segment spans residues 296-303 (CVRVTSST). The chain crosses the membrane as a helical span at residues 304–324 (TYSMVGALNKLPIAVSGLIFF). At 325-327 (DAP) the chain is on the lumenal side. A helical transmembrane segment spans residues 328-348 (VTFPSVSAIVVGFVSGIVYAV). Residues 349-381 (AKIKQNAKPKTGVLPTSNPVSASSQSMRDSLRS) lie on the Cytoplasmic side of the membrane. The disordered stretch occupies residues 362–381 (LPTSNPVSASSQSMRDSLRS).

Belongs to the TPT transporter family. SLC35D subfamily. As to quaternary structure, homooligomer.

The protein resides in the golgi apparatus membrane. The protein localises to the cytoplasmic vesicle membrane. It is found in the endoplasmic reticulum membrane. Involved in the import of GDP-mannose from the cytoplasm into the Golgi lumen. The polypeptide is GDP-mannose transporter (gmt1) (Aspergillus clavatus (strain ATCC 1007 / CBS 513.65 / DSM 816 / NCTC 3887 / NRRL 1 / QM 1276 / 107)).